A 147-amino-acid polypeptide reads, in one-letter code: Hemoglobin subunit beta-3 (147 aa).

One can recognise a Globin domain in the interval 3–147 (HWTAEEKAVI…LVDALSHSYH (145 aa)). Heme b is bound by residues His-64 and His-93.

Belongs to the globin family. Heterotetramer of two alpha chains and two beta chains. As to expression, red blood cells.

Functionally, this is a tadpole (larval) beta chain. The protein is Hemoglobin subunit beta-3 of Aquarana catesbeiana (American bullfrog).